Here is a 259-residue protein sequence, read N- to C-terminus: uncharacterized protein (259 aa).

Positions 82 to 128 form a coiled coil; that stretch reads NSGMAETIEEKREDFQKEEKEDFTEEQNIEDLLAAVADAEGRYQTNQ. The segment at 192–259 is disordered; it reads LIQTQNQHPR…SSSRNSSTTS (68 aa). Over residues 228–240 the composition is skewed to basic residues; that stretch reads KKVHARSRKRRKT. Residues 241–259 show a composition bias toward low complexity; the sequence is SSSSSSSSSSSSRNSSTTS.

This is an uncharacterized protein from Homo sapiens (Human).